The chain runs to 61 residues: U-scoloptoxin(14)-Sm1a (61 aa).

The signal sequence occupies residues 1–24 (MNPKLCMLLLVCLMAFYVIETVQA).

This sequence belongs to the scoloptoxin-14 family. Post-translationally, contains 4 disulfide bonds. In terms of tissue distribution, expressed by the venom gland.

The protein resides in the secreted. The protein is U-scoloptoxin(14)-Sm1a of Scolopendra morsitans (Tanzanian blue ringleg centipede).